A 5412-amino-acid polypeptide reads, in one-letter code: MKGARWRRVPWVSLSCLCLCLLPHVVPGTTEDTLITGSKTAAPVTSTGSTTATLEGQSTAASSRTSNQDISASSQNHQTKSTETTSKAQTDTLTQMMTSTLFSSPSVHNVMETAPPDEMTTSFPSSVTNTLMMTSKTITMTTSTDSTLGNTEETSTAGTESSTPVTSAVSITAGQEGQSRTTSWRTSIQDTSASSQNHWTRSTQTTRESQTSTLTHRTTSTPSFSPSVHNVTGTVSQKTSPSGETATSSLCSVTNTSMMTSEKITVTTSTGSTLGNPGETSSVPVTGSLMPVTSAALVTFDPEGQSPATFSRTSTQDTTAFSKNHQTQSVETTRVSQINTLNTLTPVTTSTVLSSPSGFNPSGTVSQETFPSGETTTSSPSSVSNTFLVTSKVFRMPTSRDSTLGNTEETSLSVSGTISAITSKVSTIWWSDTLSTALSPSSLPPKISTAFHTQQSEGAETTGRPHERSSFSPGVSQEIFTLHETTTWPSSFSSKGHTTWSQTELPSTSTGAATRLVTGNPSTGTAGTIPRVPSKVSAIGEPGEPTTYSSHSTTLPKTTGAGAQTQWTQETGTTGEALLSSPSYSVTQMIKTATSPSSSPMLDRHTSQQITTAPSTNHSTIHSTSTSPQESPAVSQRGHTQAPQTTQESQTTRSVSPMTDTKTVTTPGSSFTASGHSPSEIVPQDAPTISAATTFAPAPTGDGHTTQAPTTALQAAPSSHDATLGPSGGTSLSKTGALTLANSVVSTPGGPEGQWTSASASTSPDTAAAMTHTHQAESTEASGQTQTSEPASSGSRTTSAGTATPSSSGASGTTPSGSEGISTSGETTRFSSNPSRDSHTTQSTTELLSASASHGAIPVSTGMASSIVPGTFHPTLSEASTAGRPTGQSSPTSPSASPQETAAISRMAQTQRTRTSRGSDTISLASQATDTFSTVPPTPPSITSTGLTSPQTETHTLSPSGSGKTFTTALISNATPLPVTYASSASTGHTTPLHVTDASSVSTGHATPLPVTSPSSVSTGHTTPLPVTDTSSESTGHVTPLPVTSFSSASTGDSTPLPVTDTSSASTGHVTPLPVTSLSSASTGDTTPLPVTDTSSASTGHATSLPVTDTSSVSTGHTTPLPVTDTSSASTGHATSLPVTDTSSVSTGHTTPLHVTDASSASTGQATPLPVTSLSSVSTGDTTPLPVTSPSSASTGHATPLLVTDTSSASTGHATPLPVTDASSVSTDHATSLPVTIPSAASTGHTTPLPVTDTSSASTGQATSLLVTDTSSVSTGDTTPLPVTSTSSASTGHVTPLHVTSPSSASTGHATPLPVTSLSSASTGDTMPLPVTSPSSASTGDTTPLPVTDASSVSTGHTTPLHVTDASSASTGQATPLPVTSLSSVSTGDTTPLPVTSPSSASTGHATPLLVTDTSSASTGHATPLPVTDASSVSTDHATSLPVTIPSAASTGHTTPLPVTDTSSASTGQATSLLVTDTSSVSTGDTTPLPVTSTSSASTGHVTPLHVTSPSSASTGHATPLPVTSLSSASTGDTMPLPVTSPSSASTGDTTPLPVTDASSVSTGHTTPLPVTSPSSASTGHTTPLPVTDTSSASKGDTTPLPVTSPSSASTGHTTPLPVTDTSSASTGDTTPLPVTNASSLSTGHATPLHVTSPSSASTGHATPLPVTSTSSASTGHATPLPVTGLSSATTDDTTRLPVTDVSSASTGQATPLPVTSLSSVSTGDTTPLPVTSPSSASTGHASPLLVTDASSASTGQATPLPVTDTSSVSTAHATPLPVTGLSSASTDDTTRLPVTDVSSASTGQAIPLPVTSPSSASTGDTTPLPVTDASSASTGDTTSLPVTIPSSASSGHTTSLPVTDASSVSTGHATSLLVTDASSVSTGDTTPLPVTDTNSASTGDTTPLHVTDASSVSTGHATSLPVTSLSSASTGDTTPLPVTSPSSASSGHTTPLPVTDASSVPTGHATSLPVTDASSVSTGHATPLPVTDASSVSTGHATPLPVTDTSSVSTGQATPLPVTSLSSASTGDTTPLPVTDTSSASTGQDTPLPVTSLSSVSTGDTTPLPVTNPSSASTGHATPLLVTDASSISTGHATSLLVTDASSVSTGHATALHDTDASSLSTGDTTPLPVTSPSSTSTGDTTPLPVTETSSVSTGHATSLPVTDTSSASTGHATSLPVTDTSSASTGHATPLPVTDTSSASTGQATPLPVTSPSSASTGHAIPLLVTDTSSASTGQATPLPVTSLSSASTGDTTPLPVTDASSVSTGHATSLPVTSLSSVSTGDTTPLPVTSPSSASTGHATPLHVTDASSASTGHATPLPVTSLSSASTGDTTPLPVTSPSSASTGHATPLHVTDASSVSTGDTTPLPVTSSSSASSGHTTPLPVTDASSASTGDTTPLPVTDTSSASTGHATHLPVTGLSSASTGDTTRLPVTNVSSASTGHATPLPVTSTSSASTGDTTPLPGTDTSSVSTGHTTPLLVTDASSVSTGDTTRLPVTSPSSASTGHTTPLPVTDTPSASTGDTTPLPVTNASSLSTRHATSLHVTSPSSASTGHATSLPVTDTSAASTGHATPLPVTSTSSASTGDTTPLPVTDTYSASTGQATPLPVTSLSSVSTGDTTPLPVTSPSSASTGHATPLLVTDASSASTGQATPLPVTSLSSVSTGDTTPLPVTSPSSASTGHATSLPVTDTSSASTGDTTSLPVTDTSSAYTGDTTSLPVTDTSSSSTGDTTPLLVTETSSVSTGDTTPLPVTDTSSASTGHATPLPVTNTSSVSTGHATPLHVTSPSSASTGHTTPLPVTDASSVSTGHATSLPVTDASSVFTGHATSLPVTIPSSASSGHTTPLPVTDASSVSTGHATSLPVTDASSVSTGHATPLPVTDASSVSTGHATPLPLTSLSSVSTGDTTPLPVTDTSSASTGQATPLPVTSLSSVSTGDTTPLPVTDTSSASTGHATSLPVTDTSSASTGHATPLPDTDTSSASTGHATLLPVTDTSSASIGHATSLPVTDTSSISTGHATPLHVTSPSSASTGHATPLPVTDTSSASTGHANPLHVTSPSSASTGHATPLPVTDTSSASTGHATPLPVTSLSSVSTGDTTPLPVTSPSSASTGHTTPLPVTDTSSASTGQATALPVTSTSSASTGDTTPLPVTDTSSASTGQATPLPVTSLSSVSTGDTTPLPVTSPSSASTGHATPLLVTDASSASTGQATPLPVTSLSSVSTGDTTPLPVTSPSSASTGHATSLPVTDTSSASTGDTTSLPVTDTSSAYTGDTTSLPVTDTSSSSTGDTTPLLVTETSSVSTGHATPLLVTDASSASTGHATPLHVTSPSSASTGDTTPVPVTDTSSVSTGHATPLPVTGLSSASTGDTTRLPVTDISSASTGQATPLPVTNTSSVSTGDTMPLPVTSPSSASTGHATPLPVTSTSSASTGHATPVPVTSTSSASTGHTTPLPVTDTSSASTGDTTPLPVTSPSSASTGHTTPLHVTIPSSASTGDTSTLPVTGASSASTGHATPLPVTDTSSVSTGHATPLPVTSLSSVSTGDTTPLPVTDASSASTGQATPLPVTSLSSVSTGDTTPLLVTDASSVSTGHATPLPVTDTSSASTGDTTRLPVTDTSSASTGQATPLPVTSLSSVSTGDTTPLLVTDASSVSTGHATPLPVTDTSSASTGDTTRLPVTDTSSASTGQATPLPVTIPSSSSSGHTTPLPVTSTSSVSTGHVTPLHVTSPSSASTGHVTPLPVTSTSSASTGHATPLLVTDASSVSTGHATPLPVTDASSASTGDTTPLPVTDTSSASTGQATPLPVTSLSSVSTGDTTPLPVTDASSASTGHATPLPVTIPSSVSTGDTMPLPVTSPSSASTGHATPLPVTGLSSASTGDTTPLPVTDTSSASTRHATPLPVTDTSSASTDDTTRLPVTDVSSASTGHATPLPVTSTSSASTGDTTPLPVTDTSSVSTGHATSLPVTSRSSASTGHATPLPVTDTSSVSTGHATPLPVTSTSSVSTGHATPLPVTSPSSASTGHATPVPVTSTSSASTGDTTPLPVTNASSLSTGHATPLHVTSPSSASRGDTSTLPVTDASSASTGHATPLPLTSLSSVSTGDTTPLPVTDTSSASTGQATPLPVTSLSSVSTGDTTPLPVTIPSSASSGHTTSLPVTDASSVSTGHGTPLPVTSTSSASTGDTTPLPVTDTSSASTGHATPLPVTDTSSASTGHATPLPVTSLSSVSTGHATPLAVSSATSASTVSSDSPLKMETPGMTTPSLKTDGGRRTATSPPPTTSQTIISTIPSTAMHTRSTAAPIPILPERGVSLFPYGAGAGDLEFVRRTVDFTSPLFKPATGFPLGSSLRDSLYFTDNGQIIFPESDYQIFSYPNPLPTGFTGRDPVALVAPFWDDADFSTGRGTTFYQEYETFYGEHSLLVQQAESWIRKMTNNGGYKARWALKVTWVNAHAYPAQWTLGSNTYQAILSTDGSRSYALFLYQSGGMQWDVAQRSGNPVLMGFSSGDGYFENSPLMSQPVWERYRPDRFLNSNSGLQGLQFYRLHREERPNYRLECLQWLKSQPRWPSWGWNQVSCPCSWQQGRRDLRFQPVSIGRWGLGSRQLCSFTSWRGGVCCSYGPWGEFREGWHVQRPWQLAQELEPQSWCCRWNDKPYLCALYQQRRPHVGCATYRPPQPAWMFGDPHITTLDGVSYTFNGLGDFLLVGAQDGNSSFLLQGRTAQTGSAQATNFIAFAAQYRSSSLGPVTVQWLLEPHDAIRVLLDNQTVTFQPDHEDGGGQETFNATGVLLSRNGSEVSASFDGWATVSVIALSNILHASASLPPEYQNRTEGLLGVWNNNPEDDFRMPNGSTIPPGSPEEMLFHFGMTWQINGTGLLGKRNDQLPSNFTPVFYSQLQKNSSWAEHLISNCDGDSSCIYDTLALRNASIGLHTREVSKNYEQANATLNQYPPSINGGRVIEAYKGQTTLIQYTSNAEDANFTLRDSCTDLELFENGTLLWTPKSLEPFTLEILARSAKIGLASALQPRTVVCHCNAESQCLYNQTSRVGNSSLEVAGCKCDGGTFGRYCEGSEDACEEPCFPSVHCVPGKGCEACPPNLTGDGRHCAALGSSFLCQNQSCPVNYCYNQGHCYISQTLGCQPMCTCPPAFTDSRCFLAGNNFSPTVNLELPLRVIQLLLSEEENASMAEVNASVAYRLGTLDMRAFLRNSQVERIDSAAPASGSPIQHWMVISEFQYRPRGPVIDFLNNQLLAAVVEAFLYHVPRRSEEPRNDVVFQPISGEDVRDVTALNVSTLKAYFRCDGYKGYDLVYSPQSGFTCVSPCSRGYCDHGGQCQHLPSGPRCSCVSFSIYTAWGEHCEHLSMKLDAFFGIFFGALGGLLLLGVGTFVVLRFWGCSGARFSYFLNSAEALP.

The signal sequence occupies residues 1–28; that stretch reads MKGARWRRVPWVSLSCLCLCLLPHVVPG. 2 disordered regions span residues 40 to 87 and 142 to 249; these read TAAP…TTSK and TSTD…ATSS. Residues 43 to 4241 are variable number of tandem repeats (VNTR); the sequence is PVTSTGSTTA…SVSTGHATPL (4199 aa). A compositionally biased stretch (low complexity) spans 142 to 163; that stretch reads TSTDSTLGNTEETSTAGTESST. 2 O-linked (GalNAc...) threonine glycosylation sites follow: Thr-154 and Thr-156. Polar residues predominate over residues 164 to 199; it reads PVTSAVSITAGQEGQSRTTSWRTSIQDTSASSQNHW. Low complexity predominate over residues 200 to 223; the sequence is TRSTQTTRESQTSTLTHRTTSTPS. Residues 224 to 249 show a composition bias toward polar residues; the sequence is FSPSVHNVTGTVSQKTSPSGETATSS. A glycan (N-linked (GlcNAc...) asparagine) is linked at Asn-230. Thr-234 carries O-linked (GalNAc...) threonine glycosylation. Asn-255 carries an N-linked (GlcNAc...) asparagine glycan. 3 stretches are compositionally biased toward polar residues: residues 267-285, 306-328, and 358-367; these read TTST…SVPV, SPAT…HQTQ, and GFNPSGTVSQ. Disordered regions lie at residues 267–286, 303–328, 353–383, 438–473, 488–580, 592–853, 868–963, 983–1864, 1878–2078, 2111–2220, 2232–2814, 2837–3306, 3320–3580, 3592–3644, 3656–3756, and 3769–4223; these read TTST…VPVT, EGQS…HQTQ, LSSP…PSSV, LSPS…SFSP, WPSS…ALLS, TATS…ASAS, VPGT…SGSG, SSAS…DASS, ASSV…TGHA, TALH…ASTG, SAST…TGHA, IPSS…SSVS, SAST…VSTG, SVST…VSTG, SVST…ASTG, and VSTG…GHAT. 3 O-linked (GalNAc...) threonine glycosylation sites follow: Thr-364, Thr-369, and Thr-376. The segment covering 368–383 has biased composition (low complexity); sequence ETFPSGETTTSSPSSV. Composition is skewed to polar residues over residues 450–459, 488–526, and 546–557; these read AFHTQQSEGA, WPSS…TGTA, and TTYSSHSTTLPK. 2 stretches are compositionally biased toward low complexity: residues 558–577 and 615–627; these read TTGA…TGEA and STNH…TSTS. Residue Asn-617 is glycosylated (N-linked (GlcNAc...) asparagine). Thr-620, Thr-666, and Thr-688 each carry an O-linked (GalNAc...) threonine glycan. Over residues 628–677 the composition is skewed to polar residues; it reads PQESPAVSQRGHTQAPQTTQESQTTRSVSPMTDTKTVTTPGSSFTASGHS. Residues 705-717 are compositionally biased toward low complexity; it reads TTQAPTTALQAAP. Over residues 729–746 the composition is skewed to polar residues; that stretch reads GTSLSKTGALTLANSVVS. O-linked (GalNAc...) threonine glycosylation occurs at Thr-747. A compositionally biased stretch (low complexity) spans 756 to 771; sequence TSASASTSPDTAAAMT. The segment covering 772–789 has biased composition (polar residues); the sequence is HTHQAESTEASGQTQTSE. Residues 790-828 show a composition bias toward low complexity; that stretch reads PASSGSRTTSAGTATPSSSGASGTTPSGSEGISTSGETT. Residues Thr-797, Thr-798, Thr-802, Thr-804, Thr-813, and Thr-814 are each glycosylated (O-linked (GalNAc...) threonine). Polar residues predominate over residues 829–852; it reads RFSSNPSRDSHTTQSTTELLSASA. Thr-881, Thr-886, and Thr-892 each carry an O-linked (GalNAc...) threonine glycan. Low complexity predominate over residues 885 to 903; that stretch reads PTGQSSPTSPSASPQETAA. Polar residues predominate over residues 907–928; that stretch reads MAQTQRTRTSRGSDTISLASQA. Residues 929-950 are compositionally biased toward low complexity; the sequence is TDTFSTVPPTPPSITSTGLTSP. 54 O-linked (GalNAc...) threonine glycosylation sites follow: Thr-931, Thr-934, Thr-938, Thr-943, Thr-945, Thr-948, Thr-952, Thr-954, Thr-1003, Thr-1007, Thr-1012, Thr-1019, Thr-1022, Thr-1023, Thr-1028, Thr-1030, Thr-1035, Thr-1039, Thr-1044, Thr-1051, Thr-1055, Thr-1060, Thr-1062, Thr-1067, Thr-1071, Thr-1076, Thr-1083, Thr-1086, Thr-1087, Thr-1092, Thr-1094, Thr-1099, Thr-1103, Thr-1108, Thr-1110, Thr-1115, Thr-1118, Thr-1119, Thr-1124, Thr-1126, Thr-1131, Thr-1135, Thr-1172, Thr-1179, Thr-1182, Thr-1183, Thr-1188, Thr-1195, Thr-1199, Thr-1204, Thr-1236, Thr-1243, Thr-1246, and Thr-1247. A compositionally biased stretch (polar residues) spans 951–963; sequence QTETHTLSPSGSG. A compositionally biased stretch (low complexity) spans 1007–1024; sequence TPLPVTSPSSVSTGHTTP. A compositionally biased stretch (polar residues) spans 1028-1054; the sequence is TDTSSESTGHVTPLPVTSFSSASTGDS. Over residues 1060 to 1086 the composition is skewed to polar residues; the sequence is TDTSSASTGHVTPLPVTSLSSASTGDT. The segment covering 1092–1118 has biased composition (polar residues); it reads TDTSSASTGHATSLPVTDTSSVSTGHT. 2 stretches are compositionally biased toward polar residues: residues 1124-1150 and 1157-1197; these read TDTS…TGHT and DASS…STGH. Polar residues-rich tracts occupy residues 1204–1213 and 1221–1246; these read TDTSSASTGH and DASS…TGHT. Residues 1252–1262 are compositionally biased toward polar residues; the sequence is TDTSSASTGQA. The segment covering 1263–1279 has biased composition (low complexity); that stretch reads TSLLVTDTSSVSTGDTT. O-linked (GalNAc...) threonine glycans are attached at residues Thr-1278, Thr-1279, Thr-1284, Thr-1286, Thr-1291, Thr-1295, Thr-1300, Thr-1307, Thr-1311, Thr-1316, Thr-1323, Thr-1326, Thr-1332, Thr-1339, Thr-1342, Thr-1343, and Thr-1348. Positions 1281–1325 are enriched in polar residues; that stretch reads LPVTSTSSASTGHVTPLHVTSPSSASTGHATPLPVTSLSSASTGD. Positions 1332-1342 are enriched in polar residues; the sequence is TSPSSASTGDT. 2 stretches are compositionally biased toward polar residues: residues 1349 to 1358 and 1365 to 1405; these read DASSVSTGHT and DASS…STGH. O-linked (GalNAc...) threonine glycosylation is found at Thr-1380, Thr-1387, Thr-1390, Thr-1391, Thr-1396, Thr-1403, Thr-1407, Thr-1412, Thr-1444, Thr-1451, Thr-1454, and Thr-1455. Polar residues-rich tracts occupy residues 1412–1421 and 1429–1454; these read TDTSSASTGH and DASS…TGHT. Positions 1460-1470 are enriched in polar residues; that stretch reads TDTSSASTGQA. Low complexity predominate over residues 1471 to 1487; it reads TSLLVTDTSSVSTGDTT. Thr-1486, Thr-1487, Thr-1492, Thr-1494, Thr-1499, Thr-1503, Thr-1508, Thr-1515, Thr-1519, Thr-1524, Thr-1531, Thr-1534, Thr-1540, Thr-1547, Thr-1550, Thr-1551, Thr-1556, Thr-1563, Thr-1566, Thr-1567, Thr-1572, Thr-1579, Thr-1582, Thr-1583, Thr-1588, Thr-1590, Thr-1598, Thr-1599, Thr-1604, Thr-1611, Thr-1614, Thr-1615, Thr-1620, Thr-1622, Thr-1627, and Thr-1630 each carry an O-linked (GalNAc...) threonine glycan. A compositionally biased stretch (polar residues) spans 1489-1533; the sequence is LPVTSTSSASTGHVTPLHVTSPSSASTGHATPLPVTSLSSASTGD. Polar residues predominate over residues 1540 to 1550; the sequence is TSPSSASTGDT. The segment covering 1557-1582 has biased composition (polar residues); the sequence is DASSVSTGHTTPLPVTSPSSASTGHT. Residues 1588 to 1614 are compositionally biased toward polar residues; that stretch reads TDTSSASKGDTTPLPVTSPSSASTGHT. The segment covering 1620-1631 has biased composition (low complexity); it reads TDTSSASTGDTT. Positions 1633 to 1661 are enriched in polar residues; it reads LPVTNASSLSTGHATPLHVTSPSSASTGH. N-linked (GlcNAc...) asparagine glycosylation occurs at Asn-1637. 24 O-linked (GalNAc...) threonine glycosylation sites follow: Thr-1659, Thr-1663, Thr-1668, Thr-1670, Thr-1675, Thr-1679, Thr-1716, Thr-1723, Thr-1726, Thr-1727, Thr-1732, Thr-1764, Thr-1766, Thr-1812, Thr-1819, Thr-1822, Thr-1823, Thr-1828, Thr-1835, Thr-1838, Thr-1839, Thr-1844, Thr-1854, and Thr-1855. A compositionally biased stretch (low complexity) spans 1668 to 1679; sequence TSTSSASTGHAT. 3 stretches are compositionally biased toward polar residues: residues 1701–1741, 1749–1773, and 1812–1822; these read DVSS…STGH, DASS…STAH, and TSPSSASTGDT. Residues 1828-1840 are compositionally biased toward low complexity; that stretch reads TDASSASTGDTTS. Composition is skewed to polar residues over residues 1841-1864, 1892-1902, and 1909-1950; these read LPVT…DASS, TDTNSASTGDT, and DASS…SGHT. O-linked (GalNAc...) threonine glycosylation is found at Thr-1931, Thr-1934, Thr-1935, Thr-1940, Thr-1950, Thr-1951, Thr-1956, Thr-1963, Thr-1995, Thr-1999, Thr-2004, Thr-2006, Thr-2015, Thr-2020, Thr-2027, Thr-2030, Thr-2031, Thr-2036, Thr-2038, Thr-2047, Thr-2052, Thr-2062, Thr-2063, Thr-2132, Thr-2137, Thr-2139, Thr-2142, Thr-2143, Thr-2148, Thr-2150, Thr-2155, Thr-2159, Thr-2164, Thr-2180, Thr-2182, Thr-2187, Thr-2191, Thr-2196, Thr-2198, Thr-2203, Thr-2207, Thr-2244, Thr-2254, and Thr-2255. Positions 1957-1981 are enriched in polar residues; it reads DASSVPTGHATSLPVTDASSVSTGH. Positions 2004-2030 are enriched in polar residues; that stretch reads TDTSSVSTGQATPLPVTSLSSASTGDT. Positions 2036–2077 are enriched in polar residues; it reads TDTSSASTGQDTPLPVTSLSSVSTGDTTPLPVTNPSSASTGH. A compositionally biased stretch (low complexity) spans 2125 to 2146; the sequence is DTTPLPVTSPSSTSTGDTTPLP. Residues 2148–2189 are compositionally biased toward polar residues; the sequence is TETSSVSTGHATSLPVTDTSSASTGHATSLPVTDTSSASTGH. 2 stretches are compositionally biased toward polar residues: residues 2196–2219 and 2232–2254; these read TDTS…SAST and SAST…TGDT. Polar residues predominate over residues 2261–2270; that stretch reads DASSVSTGHA. The segment covering 2271–2283 has biased composition (low complexity); it reads TSLPVTSLSSVST. O-linked (GalNAc...) threonine glycosylation is found at Thr-2283, Thr-2286, Thr-2287, Thr-2292, Thr-2299, Thr-2303, Thr-2308, Thr-2324, Thr-2331, Thr-2334, Thr-2335, Thr-2340, Thr-2347, Thr-2351, Thr-2356, Thr-2363, Thr-2366, Thr-2367, Thr-2372, Thr-2382, Thr-2383, Thr-2388, Thr-2395, Thr-2398, Thr-2399, and Thr-2406. Polar residues predominate over residues 2284–2301; sequence GDTTPLPVTSPSSASTGH. A compositionally biased stretch (polar residues) spans 2309-2349; sequence DASSASTGHATPLPVTSLSSASTGDTTPLPVTSPSSASTGH. The segment covering 2366–2399 has biased composition (low complexity); it reads TTPLPVTSSSSASSGHTTPLPVTDASSASTGDTT. 2 stretches are compositionally biased toward polar residues: residues 2404–2413 and 2421–2445; these read TDTSSASTGH and GLSS…STGH. Asn-2437 carries N-linked (GlcNAc...) asparagine glycosylation. Thr-2452, Thr-2454, Thr-2459, Thr-2462, Thr-2463, Thr-2468, Thr-2500, Thr-2507, Thr-2510, Thr-2511, Thr-2516, Thr-2518, Thr-2523, and Thr-2526 each carry an O-linked (GalNAc...) threonine glycan. A compositionally biased stretch (low complexity) spans 2452–2471; sequence TSTSSASTGDTTPLPGTDTS. Residues 2485-2510 show a composition bias toward polar residues; it reads DASSVSTGDTTRLPVTSPSSASTGHT. Residues 2517–2573 show a composition bias toward polar residues; it reads DTPSASTGDTTPLPVTNASSLSTRHATSLHVTSPSSASTGHATSLPVTDTSAASTGH. N-linked (GlcNAc...) asparagine glycosylation occurs at Asn-2533. O-linked (GalNAc...) threonine glycans are attached at residues Thr-2564, Thr-2566, Thr-2571, Thr-2575, Thr-2580, Thr-2582, Thr-2587, Thr-2590, Thr-2591, Thr-2596, Thr-2598, Thr-2619, Thr-2622, Thr-2623, Thr-2628, Thr-2660, Thr-2667, Thr-2670, Thr-2671, Thr-2676, Thr-2683, Thr-2687, Thr-2692, and Thr-2694. The span at 2580–2591 shows a compositional bias: low complexity; it reads TSTSSASTGDTT. Composition is skewed to polar residues over residues 2597–2637 and 2645–2691; these read DTYS…STGH and DASS…SLPV. A compositionally biased stretch (low complexity) spans 2692–2704; sequence TDTSSASTGDTTS. Over residues 2705-2723 the composition is skewed to polar residues; sequence LPVTDTSSAYTGDTTSLPV. The span at 2724–2735 shows a compositional bias: low complexity; that stretch reads TDTSSSSTGDTT. O-linked (GalNAc...) threonine glycosylation is found at Thr-2740, Thr-2742, Thr-2750, Thr-2751, Thr-2756, Thr-2758, Thr-2763, and Thr-2767. Positions 2740-2750 are enriched in polar residues; sequence TETSSVSTGDT. Polar residues predominate over residues 2756 to 2798; sequence TDTSSASTGHATPLPVTNTSSVSTGHATPLHVTSPSSASTGHT. N-linked (GlcNAc...) asparagine glycosylation occurs at Asn-2773. O-linked (GalNAc...) threonine glycosylation is found at Thr-2779, Thr-2783, Thr-2788, Thr-2795, Thr-2798, Thr-2799, and Thr-2804. 2 stretches are compositionally biased toward polar residues: residues 2805–2814 and 2837–2846; these read DASSVSTGHA and IPSSASSGHT. 3 O-linked (GalNAc...) threonine glycosylation sites follow: Thr-2846, Thr-2847, and Thr-2852. The segment covering 2853 to 2877 has biased composition (polar residues); the sequence is DASSVSTGHATSLPVTDASSVSTGH. Positions 2895-2907 are enriched in low complexity; the sequence is TPLPLTSLSSVST. Residues Thr-2910, Thr-2911, Thr-2916, Thr-2918, Thr-2923, Thr-2927, Thr-2932, Thr-2939, Thr-2942, Thr-2943, Thr-2948, Thr-2950, Thr-2955, Thr-2959, Thr-2966, Thr-2971, and Thr-2975 are each glycosylated (O-linked (GalNAc...) threonine). The segment covering 2916–2942 has biased composition (polar residues); it reads TDTSSASTGQATPLPVTSLSSVSTGDT. Residues 2948-2973 show a composition bias toward polar residues; sequence TDTSSASTGHATSLPVTDTSSASTGH. Composition is skewed to polar residues over residues 2980-2989 and 3009-3037; these read TDTSSASTGH and LPVT…STGH. 4 O-linked (GalNAc...) threonine glycosylation sites follow: Thr-3023, Thr-3028, Thr-3035, and Thr-3039. Polar residues predominate over residues 3044-3069; that stretch reads TDTSSASTGHANPLHVTSPSSASTGH. Thr-3071, Thr-3076, Thr-3078, Thr-3083, Thr-3087, Thr-3092, Thr-3099, Thr-3102, Thr-3103, Thr-3108, Thr-3115, Thr-3118, Thr-3119, Thr-3124, Thr-3126, Thr-3131, Thr-3135, Thr-3140, Thr-3142, Thr-3147, Thr-3150, Thr-3151, Thr-3156, Thr-3158, Thr-3163, Thr-3167, Thr-3172, Thr-3179, Thr-3182, Thr-3183, Thr-3188, Thr-3220, Thr-3227, Thr-3230, Thr-3231, Thr-3236, Thr-3243, Thr-3247, Thr-3252, and Thr-3254 each carry an O-linked (GalNAc...) threonine glycan. Polar residues predominate over residues 3076–3118; the sequence is TDTSSASTGHATPLPVTSLSSVSTGDTTPLPVTSPSSASTGHT. The span at 3124 to 3134 shows a compositional bias: polar residues; sequence TDTSSASTGQA. The segment covering 3140–3151 has biased composition (low complexity); it reads TSTSSASTGDTT. Composition is skewed to polar residues over residues 3156–3197 and 3205–3251; these read TDTS…STGH and DASS…SLPV. Low complexity predominate over residues 3252-3264; the sequence is TDTSSASTGDTTS. Over residues 3265-3283 the composition is skewed to polar residues; the sequence is LPVTDTSSAYTGDTTSLPV. The span at 3284–3295 shows a compositional bias: low complexity; that stretch reads TDTSSSSTGDTT. 9 O-linked (GalNAc...) threonine glycosylation sites follow: Thr-3294, Thr-3332, Thr-3339, Thr-3342, Thr-3343, Thr-3348, Thr-3350, Thr-3355, and Thr-3359. Polar residues predominate over residues 3320–3337; the sequence is SASTGHATPLHVTSPSSA. Positions 3338-3356 are enriched in low complexity; that stretch reads STGDTTPVPVTDTSSVSTG. Polar residues-rich tracts occupy residues 3365-3374 and 3381-3405; these read GLSSASTGDT and DISS…STGD. A glycan (N-linked (GlcNAc...) asparagine) is linked at Asn-3397. O-linked (GalNAc...) threonine glycans are attached at residues Thr-3398, Thr-3403, Thr-3406, Thr-3412, Thr-3419, Thr-3423, Thr-3428, Thr-3430, Thr-3435, Thr-3439, and Thr-3444. Over residues 3412 to 3421 the composition is skewed to polar residues; the sequence is TSPSSASTGH. Positions 3428-3471 are enriched in low complexity; sequence TSTSSASTGHATPVPVTSTSSASTGHTTPLPVTDTSSASTGDTT. Ser-3445 carries an O-linked (GalNAc...) serine glycan. O-linked (GalNAc...) threonine glycosylation is found at Thr-3446, Thr-3451, Thr-3454, Thr-3455, Thr-3460, Thr-3462, Thr-3467, Thr-3470, Thr-3471, Thr-3476, Thr-3483, Thr-3486, Thr-3487, Thr-3492, Thr-3499, Thr-3502, Thr-3504, Thr-3508, Thr-3515, Thr-3519, Thr-3524, Thr-3526, Thr-3531, Thr-3535, Thr-3540, Thr-3547, Thr-3550, Thr-3551, Thr-3556, Thr-3567, Thr-3614, Thr-3615, Thr-3622, Thr-3678, Thr-3679, Thr-3686, Thr-3691, Thr-3695, Thr-3700, Thr-3710, Thr-3711, Thr-3716, Thr-3718, Thr-3723, Thr-3727, Thr-3732, Thr-3739, Thr-3743, Thr-3748, Thr-3780, Thr-3787, Thr-3790, Thr-3791, Thr-3796, Thr-3798, Thr-3803, Thr-3807, Thr-3812, Thr-3822, Thr-3823, Thr-3828, Thr-3835, Thr-3839, Thr-3844, Thr-3851, Thr-3854, Thr-3860, Thr-3867, Thr-3871, Thr-3876, Thr-3883, Thr-3886, Thr-3887, Thr-3892, Thr-3894, Thr-3899, Thr-3903, Thr-3935, Thr-3940, Thr-3942, Thr-3947, Thr-3950, Thr-3951, Thr-3956, Thr-3958, Thr-3963, Thr-3967, Thr-3972, Thr-3979, Thr-3983, Thr-3988, Thr-3990, Thr-3995, Thr-3999, Thr-4004, Thr-4006, Thr-4011, Thr-4015, and Thr-4020. The segment covering 3473 to 3486 has biased composition (polar residues); it reads LPVTSPSSASTGHT. Over residues 3493–3517 the composition is skewed to polar residues; that stretch reads IPSSASTGDTSTLPVTGASSASTGH. Over residues 3524 to 3550 the composition is skewed to polar residues; the sequence is TDTSSVSTGHATPLPVTSLSSVSTGDT. Polar residues predominate over residues 3557-3580; that stretch reads DASSASTGQATPLPVTSLSSVSTG. A compositionally biased stretch (low complexity) spans 3604–3615; it reads TDTSSASTGDTT. The span at 3620 to 3644 shows a compositional bias: polar residues; sequence TDTSSASTGQATPLPVTSLSSVSTG. Over residues 3668–3679 the composition is skewed to low complexity; the sequence is TDTSSASTGDTT. Over residues 3684 to 3694 the composition is skewed to polar residues; sequence TDTSSASTGQA. Residues 3710 to 3728 show a composition bias toward low complexity; the sequence is TTPLPVTSTSSVSTGHVTP. Positions 3730-3741 are enriched in polar residues; sequence HVTSPSSASTGH. Low complexity predominate over residues 3780–3791; it reads TDASSASTGDTT. Polar residues predominate over residues 3796 to 3822; sequence TDTSSASTGQATPLPVTSLSSVSTGDT. The segment covering 3860–3869 has biased composition (polar residues); the sequence is TSPSSASTGH. A compositionally biased stretch (polar residues) spans 3877–3886; it reads GLSSASTGDT. The segment covering 3892–3901 has biased composition (polar residues); it reads TDTSSASTRH. Over residues 3940-3951 the composition is skewed to low complexity; that stretch reads TSTSSASTGDTT. Over residues 3956-3981 the composition is skewed to polar residues; sequence TDTSSVSTGHATSLPVTSRSSASTGH. The segment covering 3988-3997 has biased composition (polar residues); that stretch reads TDTSSVSTGH. Residues 3999-4011 are compositionally biased toward low complexity; sequence TPLPVTSTSSVST. Over residues 4018-4029 the composition is skewed to polar residues; the sequence is PVTSPSSASTGH. O-linked (GalNAc...) serine glycans are attached at residues Ser-4021, Ser-4023, Ser-4024, and Ser-4026. 3 O-linked (GalNAc...) threonine glycosylation sites follow: Thr-4027, Thr-4031, and Thr-4036. Residues 4030 to 4047 are compositionally biased toward low complexity; the sequence is ATPVPVTSTSSASTGDTT. An O-linked (GalNAc...) serine glycan is attached at Ser-4037. O-linked (GalNAc...) threonine glycosylation is found at Thr-4038, Thr-4043, Thr-4046, and Thr-4047. Residues 4049–4093 show a composition bias toward polar residues; it reads LPVTNASSLSTGHATPLHVTSPSSASRGDTSTLPVTDASSASTGH. N-linked (GlcNAc...) asparagine glycosylation is present at Asn-4053. Residues Thr-4078 and Thr-4084 are each glycosylated (O-linked (GalNAc...) threonine). Low complexity predominate over residues 4095–4107; sequence TPLPLTSLSSVST. O-linked (GalNAc...) threonine glycans are attached at residues Thr-4110, Thr-4111, Thr-4116, Thr-4118, Thr-4123, Thr-4127, Thr-4132, Thr-4139, Thr-4142, Thr-4143, Thr-4148, Thr-4158, Thr-4159, Thr-4164, Thr-4171, Thr-4175, Thr-4180, Thr-4182, Thr-4187, Thr-4190, Thr-4191, Thr-4196, Thr-4198, Thr-4203, Thr-4207, Thr-4212, Thr-4214, Thr-4219, Thr-4223, and Thr-4239. Polar residues predominate over residues 4116–4142; sequence TDTSSASTGQATPLPVTSLSSVSTGDT. Positions 4149-4173 are enriched in polar residues; it reads IPSSASSGHTTSLPVTDASSVSTGH. The span at 4180-4191 shows a compositional bias: low complexity; sequence TSTSSASTGDTT. The span at 4196 to 4205 shows a compositional bias: polar residues; the sequence is TDTSSASTGH. Residues 4212 to 4223 are compositionally biased toward polar residues; the sequence is TDTSSASTGHAT. Residues 4242–4254 show a composition bias toward low complexity; the sequence is AVSSATSASTVSS. The tract at residues 4242 to 4288 is disordered; it reads AVSSATSASTVSSDSPLKMETPGMTTPSLKTDGGRRTATSPPPTTSQ. O-linked (GalNAc...) threonine glycans are attached at residues Thr-4272, Thr-4278, Thr-4280, Thr-4289, Thr-4293, and Thr-4297. Residues 4397–4552 form the NIDO domain; the sequence is PFWDDADFST…GLQFYRLHRE (156 aa). The 116-residue stretch at 4553–4668 folds into the AMOP domain; it reads ERPNYRLECL…YLCALYQQRR (116 aa). The VWFD domain occupies 4680 to 4880; it reads QPAWMFGDPH…TWQINGTGLL (201 aa). N-linked (GlcNAc...) asparagine glycans are attached at residues Asn-4715, Asn-4768, Asn-4787, Asn-4796, Asn-4831, Asn-4852, Asn-4875, Asn-4902, Asn-4928, Asn-4946, Asn-4982, Asn-4997, Asn-5045, Asn-5052, Asn-5100, and Asn-5119. In terms of domain architecture, EGF-like 1 spans 5118–5157; it reads QNQSCPVNYCYNQGHCYISQTLGCQPMCTCPPAFTDSRCF. Disulfide bonds link Cys-5122–Cys-5133, Cys-5127–Cys-5145, and Cys-5147–Cys-5156. Asn-5185, Asn-5192, and Asn-5292 each carry an N-linked (GlcNAc...) asparagine glycan. One can recognise an EGF-like 2 domain in the interval 5321–5360; sequence VSPCSRGYCDHGGQCQHLPSGPRCSCVSFSIYTAWGEHCE. 3 disulfide bridges follow: Cys-5324-Cys-5335, Cys-5329-Cys-5344, and Cys-5346-Cys-5359. A helical membrane pass occupies residues 5369 to 5389; the sequence is FFGIFFGALGGLLLLGVGTFV.

A heterodimeric complex, composed of a mucin-4 alpha chain and a cysteine-rich transmembrane mucin-4 beta chain. Mucin-4 beta chain interacts with ERBB2 via the EGF-like domain 1. In nonpolarized cells, associates with ERBB2 and ERBB3. Proteolytically cleaved into 2 chains, mucin-4 alpha chain and mucin-4 beta chain. Post-translationally, highly O-glycosylated. In terms of processing, is predominantly N-glycosylated. As to expression, expressed in the thymus, thyroid, lung, trachea, esophagus, stomach, small intestine, colon, testis, prostate, ovary, uterus, placenta, and mammary and salivary glands. Expressed in carcinomas arising from some of these epithelia, such as lung cancers, squamous cell carcinomas of the upper aerodigestive tract, mammary carcinomas, biliary tract, colon, and cervix cancers. Minimally or not expressed in the normal pancreas or chronic pancreatitis, but is highly expressed in pancreatic tumors and pancreatic tumor cell lines.

It is found in the cell membrane. It localises to the secreted. Functionally, membrane-bound mucin, a family of highly glycosylated proteins that constitute the major component of the mucus, the slimy and viscous secretion covering epithelial surfaces. These glycoproteins play important roles in the protection of the epithelium and are implicated in epithelial renewal and differentiation. Regulates cellular behavior through both anti-adhesive effects on cell-cell and cell-extracellular matrix interactions and its ability to act as an intramembrane ligand for ERBB2. Plays an important role in proliferation and differentiation of epithelial cells by inducing specific phosphorylation of ERBB2. In polarized epithelial cells, segregates ERBB2 and other ERBB receptors and prevents ERBB2 from acting as a coreceptor. The interaction with ERBB2 leads to enhanced expression of CDKN1B. The formation of a MUC4-ERBB2-ERBB3-NRG1 complex leads to down-regulation of CDKN1B, resulting in repression of apoptosis and stimulation of proliferation. Its ability to promote tumor growth may be mainly due to repression of apoptosis as opposed to proliferation. The polypeptide is Mucin-4 (MUC4) (Homo sapiens (Human)).